We begin with the raw amino-acid sequence, 119 residues long: NADH-quinone oxidoreductase subunit A (119 aa).

A run of 3 helical transmembrane segments spans residues 7 to 27 (FPVL…MSIG), 63 to 83 (LIAI…PWGV), and 88 to 108 (IGWP…VGFV).

It belongs to the complex I subunit 3 family. In terms of assembly, NDH-1 is composed of 14 different subunits. Subunits NuoA, H, J, K, L, M, N constitute the membrane sector of the complex.

Its subcellular location is the cell inner membrane. The enzyme catalyses a quinone + NADH + 5 H(+)(in) = a quinol + NAD(+) + 4 H(+)(out). In terms of biological role, NDH-1 shuttles electrons from NADH, via FMN and iron-sulfur (Fe-S) centers, to quinones in the respiratory chain. The immediate electron acceptor for the enzyme in this species is believed to be ubiquinone. Couples the redox reaction to proton translocation (for every two electrons transferred, four hydrogen ions are translocated across the cytoplasmic membrane), and thus conserves the redox energy in a proton gradient. This is NADH-quinone oxidoreductase subunit A from Cupriavidus pinatubonensis (strain JMP 134 / LMG 1197) (Cupriavidus necator (strain JMP 134)).